A 383-amino-acid polypeptide reads, in one-letter code: tRNA-specific 2-thiouridylase MnmA (383 aa).

Residues 6 to 13 (AMSGGVDS) and L32 contribute to the ATP site. The active-site Nucleophile is C101. A disulfide bridge connects residues C101 and C199. G125 is a binding site for ATP. The tract at residues 148-150 (KDQ) is interaction with tRNA. Residue C199 is the Cysteine persulfide intermediate of the active site.

This sequence belongs to the MnmA/TRMU family.

It is found in the cytoplasm. It carries out the reaction S-sulfanyl-L-cysteinyl-[protein] + uridine(34) in tRNA + AH2 + ATP = 2-thiouridine(34) in tRNA + L-cysteinyl-[protein] + A + AMP + diphosphate + H(+). Its function is as follows. Catalyzes the 2-thiolation of uridine at the wobble position (U34) of tRNA, leading to the formation of s(2)U34. The sequence is that of tRNA-specific 2-thiouridylase MnmA from Kocuria rhizophila (strain ATCC 9341 / DSM 348 / NBRC 103217 / DC2201).